We begin with the raw amino-acid sequence, 446 residues long: N-succinylarginine dihydrolase (446 aa).

Substrate contacts are provided by residues 19-28, Asn-110, and 137-138; these read AGLSFGNEAS and HR. Glu-174 is an active-site residue. Position 213 (Arg-213) interacts with substrate. The active site involves His-249. Residues Asp-251 and Asn-364 each coordinate substrate. Cys-370 (nucleophile) is an active-site residue.

Belongs to the succinylarginine dihydrolase family. In terms of assembly, homodimer.

It carries out the reaction N(2)-succinyl-L-arginine + 2 H2O + 2 H(+) = N(2)-succinyl-L-ornithine + 2 NH4(+) + CO2. The protein operates within amino-acid degradation; L-arginine degradation via AST pathway; L-glutamate and succinate from L-arginine: step 2/5. In terms of biological role, catalyzes the hydrolysis of N(2)-succinylarginine into N(2)-succinylornithine, ammonia and CO(2). In Acinetobacter baylyi (strain ATCC 33305 / BD413 / ADP1), this protein is N-succinylarginine dihydrolase.